Consider the following 637-residue polypeptide: Nuclear receptor subfamily 2 group C member 1-B (637 aa).

The segment at residues 149–224 (VELCVVCGDK…LGMKQDSVQC (76 aa)) is a DNA-binding region (nuclear receptor). 2 NR C4-type zinc fingers span residues 152–172 (CVVCGDKASGRHYGAVTCEGC) and 188–207 (CRGSKDCVINKHYRNRCQYC). Positions 383 to 624 (CVGSGSNLLP…SIIPYILRME (242 aa)) constitute an NR LBD domain.

Belongs to the nuclear hormone receptor family. NR2 subfamily.

The protein localises to the nucleus. In terms of biological role, orphan nuclear receptor. Binds the IR7 element in the promoter of its own gene in an autoregulatory negative feedback mechanism. Primarily repressor of a broad range of genes. Binds to hormone response elements (HREs) consisting of two 5'-AGGTCA-3' half site direct repeat consensus sequences. The chain is Nuclear receptor subfamily 2 group C member 1-B (nr2c1-b) from Xenopus laevis (African clawed frog).